A 165-amino-acid chain; its full sequence is UPF0303 protein Bcenmc03_1534 (165 aa).

Belongs to the UPF0303 family.

The chain is UPF0303 protein Bcenmc03_1534 from Burkholderia orbicola (strain MC0-3).